A 144-amino-acid chain; its full sequence is Large ribosomal subunit protein uL15 (144 aa).

Positions Met-1 to Ala-58 are disordered. A compositionally biased stretch (gly residues) spans Arg-21 to Gly-31.

This sequence belongs to the universal ribosomal protein uL15 family. As to quaternary structure, part of the 50S ribosomal subunit.

Functionally, binds to the 23S rRNA. The polypeptide is Large ribosomal subunit protein uL15 (Marinobacter nauticus (strain ATCC 700491 / DSM 11845 / VT8) (Marinobacter aquaeolei)).